A 318-amino-acid polypeptide reads, in one-letter code: Acetyl-coenzyme A carboxylase carboxyl transferase subunit alpha (318 aa).

The CoA carboxyltransferase C-terminal domain maps to 38 to 292; sequence KLEKRLAKLE…NKTITKSLHA (255 aa).

Belongs to the AccA family. In terms of assembly, acetyl-CoA carboxylase is a heterohexamer composed of biotin carboxyl carrier protein (AccB), biotin carboxylase (AccC) and two subunits each of ACCase subunit alpha (AccA) and ACCase subunit beta (AccD).

The protein resides in the cytoplasm. The catalysed reaction is N(6)-carboxybiotinyl-L-lysyl-[protein] + acetyl-CoA = N(6)-biotinyl-L-lysyl-[protein] + malonyl-CoA. It participates in lipid metabolism; malonyl-CoA biosynthesis; malonyl-CoA from acetyl-CoA: step 1/1. In terms of biological role, component of the acetyl coenzyme A carboxylase (ACC) complex. First, biotin carboxylase catalyzes the carboxylation of biotin on its carrier protein (BCCP) and then the CO(2) group is transferred by the carboxyltransferase to acetyl-CoA to form malonyl-CoA. This is Acetyl-coenzyme A carboxylase carboxyl transferase subunit alpha from Listeria monocytogenes serotype 4b (strain CLIP80459).